A 63-amino-acid polypeptide reads, in one-letter code: Disintegrin schistatin-like subunit B (63 aa).

One can recognise a Disintegrin domain in the interval 1–63; the sequence is NSVNPCCDPQ…TPDCPRNRYN (63 aa). Intrachain disulfides connect C6-C29, C20-C26, C25-C50, and C38-C57. Residues 42–44 carry the Cell attachment site motif; it reads RGD.

The protein belongs to the disintegrin family. Dimeric disintegrin subfamily. As to quaternary structure, heterodimer with subunit A; disulfide-linked. Expressed by the venom gland.

It localises to the secreted. Its function is as follows. May bind to both alpha-IIb/beta-3 (ITGA2B/ITGB3) and alpha-V/beta-3 (ITGAV/ITGB3) integrins, and may inhibit platelet aggregation. The polypeptide is Disintegrin schistatin-like subunit B (Echis carinatus (Saw-scaled viper)).